Reading from the N-terminus, the 224-residue chain is UPF0758 protein PM1152 (224 aa).

The 123-residue stretch at 102-224 (AFKNSENVRF…YYSFAENRLL (123 aa)) folds into the MPN domain. 3 residues coordinate Zn(2+): histidine 173, histidine 175, and aspartate 186. The short motif at 173–186 (HNHPSGNPEPSASD) is the JAMM motif element.

This sequence belongs to the UPF0758 family.

This Pasteurella multocida (strain Pm70) protein is UPF0758 protein PM1152.